Here is a 168-residue protein sequence, read N- to C-terminus: MSGKAQIFKQTGVRWLWLALVVFLADIGIKFIVMENMGYGWANRIEVLPFFNLLYVHNYGAAFSFLSDQAGWQRWLFTGIAFVVTGLLTYWMSKLPAAEKWNNVAYAMIIGGAIGNVFDRMVHGFVVDYLDFYWGTYHWPAFNLADTAICLGAAMIILDGFRKKEEEK.

Transmembrane regions (helical) follow at residues 15–35, 47–67, 75–95, and 107–127; these read WLWL…IVME, VLPF…SFLS, WLFT…MSKL, and AMII…GFVV. Residues aspartate 128 and aspartate 146 contribute to the active site. A helical transmembrane segment spans residues 141 to 161; that stretch reads AFNLADTAICLGAAMIILDGF.

The protein belongs to the peptidase A8 family.

The protein resides in the cell inner membrane. It carries out the reaction Release of signal peptides from bacterial membrane prolipoproteins. Hydrolyzes -Xaa-Yaa-Zaa-|-(S,diacylglyceryl)Cys-, in which Xaa is hydrophobic (preferably Leu), and Yaa (Ala or Ser) and Zaa (Gly or Ala) have small, neutral side chains.. Its pathway is protein modification; lipoprotein biosynthesis (signal peptide cleavage). Its function is as follows. This protein specifically catalyzes the removal of signal peptides from prolipoproteins. In Vibrio vulnificus (strain CMCP6), this protein is Lipoprotein signal peptidase.